A 200-amino-acid chain; its full sequence is Protein GrpE (200 aa).

Belongs to the GrpE family. Homodimer.

The protein resides in the cytoplasm. Participates actively in the response to hyperosmotic and heat shock by preventing the aggregation of stress-denatured proteins, in association with DnaK and GrpE. It is the nucleotide exchange factor for DnaK and may function as a thermosensor. Unfolded proteins bind initially to DnaJ; upon interaction with the DnaJ-bound protein, DnaK hydrolyzes its bound ATP, resulting in the formation of a stable complex. GrpE releases ADP from DnaK; ATP binding to DnaK triggers the release of the substrate protein, thus completing the reaction cycle. Several rounds of ATP-dependent interactions between DnaJ, DnaK and GrpE are required for fully efficient folding. This chain is Protein GrpE, found in Shewanella piezotolerans (strain WP3 / JCM 13877).